Here is a 272-residue protein sequence, read N- to C-terminus: Golgi to ER traffic protein 5 (272 aa).

2 disordered regions span residues 1–35 (MSTV…HSGT) and 85–105 (LHAP…PGSS). Residues 108–198 (ITVHLKSARN…VEFGVMIIGG (91 aa)) form the Ubiquitin-like domain. Residues 212–231 (SAEQKESYEPPKPAVGPSGE) are disordered.

The protein belongs to the GET5 family. As to quaternary structure, forms homodimers via its C-terminal domain. Component of the get4/get5/sgt2 sorting complex. Binds directly sgt12 homodimers.

It is found in the cytoplasm. In terms of biological role, component of the get4/get5/sgt2 sorting complex involved in the GET (guided entry of TA proteins) pathway that leads to the insertion of tail-anchored (TA) proteins into the endoplasmic reticulum. Get4 and get5 form an obligate complex that catalyzes the transfer of tail-anchored proteins destined to the endoplasmic reticulum from sgt2 to the cytosolic targeting factor which then targets the TA protein to the ER membrane via get1/get2. This Aspergillus fumigatus (strain ATCC MYA-4609 / CBS 101355 / FGSC A1100 / Af293) (Neosartorya fumigata) protein is Golgi to ER traffic protein 5.